Here is a 250-residue protein sequence, read N- to C-terminus: Envelope glycoprotein L (250 aa).

A signal peptide spans 1 to 18 (MELLLFVMSLILLTFSKA). A gL betaherpesvirus-type domain is found at 31–239 (KLDDCIAAVI…EAYNSKLPFR (209 aa)). C136 and C141 are oxidised to a cystine.

This sequence belongs to the herpesviridae glycoprotein L (gL) family. Betaherpesvirinae gL subfamily. Interacts with glycoprotein H (gH); this interaction is necessary for the correct processing and cell surface expression of gH. Part of a gH-gL-gO complex.

The protein localises to the virion membrane. Its subcellular location is the host cell membrane. The protein resides in the host Golgi apparatus. It localises to the host trans-Golgi network. Its function is as follows. The heterodimer glycoprotein H-glycoprotein L is required for the fusion of viral and plasma membranes leading to virus entry into the host cell. Acts as a functional inhibitor of gH and maintains gH in an inhibited form. Upon binding to host integrins, gL dissociates from gH leading to activation of the viral fusion glycoproteins gB and gH. The polypeptide is Envelope glycoprotein L (Homo sapiens (Human)).